Here is a 40-residue protein sequence, read N- to C-terminus: Large ribosomal subunit protein bL36 (40 aa).

This sequence belongs to the bacterial ribosomal protein bL36 family.

The polypeptide is Large ribosomal subunit protein bL36 (Corynebacterium kroppenstedtii (strain DSM 44385 / JCM 11950 / CIP 105744 / CCUG 35717)).